The following is a 76-amino-acid chain: Small ribosomal subunit protein bS18 (76 aa).

The protein belongs to the bacterial ribosomal protein bS18 family. Part of the 30S ribosomal subunit. Forms a tight heterodimer with protein bS6.

Binds as a heterodimer with protein bS6 to the central domain of the 16S rRNA, where it helps stabilize the platform of the 30S subunit. The sequence is that of Small ribosomal subunit protein bS18 from Stutzerimonas stutzeri (strain A1501) (Pseudomonas stutzeri).